An 83-amino-acid chain; its full sequence is MEQMRQDIIELKQNDKSQEQRISLLERTSDRHDQQIQAVTESLSKIHENTTWIKRTITGAIISTLSTVVVGGILTIVWNLVKN.

Positions 1-45 (MEQMRQDIIELKQNDKSQEQRISLLERTSDRHDQQIQAVTESLSK) form a coiled coil. The chain crosses the membrane as a helical span at residues 57 to 77 (ITGAIISTLSTVVVGGILTIV).

It localises to the host cell inner membrane. Its function is as follows. Probably functions as a holin together with holin-like protein 26. Accumulates harmlessly in the cytoplasmic membrane until it reaches a critical concentration that triggers the formation of micron-scale pores (holes) causing host cell membrane disruption and endolysin escape into the periplasmic space. Determines the precise timing of host cell lysis. In Bacillus subtilis (Bacteriophage SPP1), this protein is Holin-like protein 24.1 (24.1).